Consider the following 602-residue polypeptide: MARLTKRRQADTKAIQHLWAAIEIIRNQKQIANIDRITKYMSRVHGMHPKETTRQLSLAVKDGLIVETLTVGCKGSKAGIEQEGYWLPGDEIDWETETHDWYCFECHLPGEVLICDLCFRVYHSKCLSDEFRLRDSSSHWQCPVCRSIKKKHSNKQEMGTYLRFIVSRMKERAIDLNKKGKDSKHPMYRRLVHSAVDVPTIQEKVNEGKYRSYEEFKADAQLLLHNTVIFYGADSEQADIARMLYKDTCHELDELQLCKNCFYLSNARPDNWFCYPCIPNHELVWAKMKGFGFWPAKVMQKEDNQVDVRFFGHHHQRAWIPSENIQDITVNVHRLHVKRSMGWKKACDELELHQRFLREGRFWKSKNEDRGEEEAESSISSTSNEQLKVTQEPRAKKGRRNQSVEPKKEEPEPETEAVSSSQEIPTMPQPIERVSVSTQTKKLSASSPRMLHRSTQTTSDGVCQSMCHDKYTKIFNDFKDRMKSDHKRETERVVREALEKLRSEMEEEKRQAVNKAVASLQGDMDRKGKQLKEKCKEEFVEEIKKLAAQHKQLISQTKKKQWCYNCEEEAMYHCCWNTSYCSIKCQQEHWHAEHKRTCRRKR.

In terms of domain architecture, SAMD1-like winged helix (WH) spans 6 to 82 (KRRQADTKAI…CKGSKAGIEQ (77 aa)). Residues 100 to 148 (DWYCFECHLPGEVLICDLCFRVYHSKCLSDEFRLRDSSSHWQCPVCRSI) form a PHD-type zinc finger. The 107-residue stretch at 149-255 (KKKHSNKQEM…KDTCHELDEL (107 aa)) folds into the Bromo domain. Zn(2+)-binding residues include cysteine 258, cysteine 261, cysteine 277, and histidine 281. The PWWP domain occupies 280 to 331 (NHELVWAKMKGFGFWPAKVMQKEDNQVDVRFFGHHHQRAWIPSENIQDITVN). Residues 291–310 (FGFWPAKVMQKEDNQVDVRF) are aromatic cage required for H3.3K36me3-specific binding. A Glycyl lysine isopeptide (Lys-Gly) (interchain with G-Cter in SUMO2) cross-link involves residue lysine 366. Residues 366–461 (KNEDRGEEEA…HRSTQTTSDG (96 aa)) form a disordered region. Positions 394-400 (RAKKGRR) match the Nuclear localization signal motif. Residues lysine 407 and lysine 408 each participate in a glycyl lysine isopeptide (Lys-Gly) (interchain with G-Cter in SUMO2) cross-link. Residue serine 421 is modified to Phosphoserine. Positions 435-461 (SVSTQTKKLSASSPRMLHRSTQTTSDG) are enriched in polar residues. Zn(2+)-binding residues include cysteine 563, cysteine 566, cysteine 574, cysteine 575, cysteine 581, cysteine 585, histidine 594, and cysteine 598. Residues 563–598 (CYNCEEEAMYHCCWNTSYCSIKCQQEHWHAEHKRTC) form an MYND-type zinc finger.

Homooligomer; forms homooligomers via its C-terminus. Interacts with histone H3.3 trimethylated at 'Lys-36' (H3.3K36me3). Interacts (via MYND-type zinc finger) with NCOR1. Interacts (via MYND-type zinc finger) with MGA protein (via PXLXP motif). Interacts (via MYND-type zinc finger) with EZH2. Interacts with EMSY and E2F6. Interacts with PIAS1 and UBE2I. Post-translationally, ubiquitinated, leading to proteasomal degradation. In terms of processing, sumoylated following its interaction with PIAS1 and UBE2I.

The protein localises to the nucleus. The protein resides in the chromosome. Functionally, chromatin reader that specifically recognizes and binds histone H3.3 trimethylated at 'Lys-36' (H3.3K36me3) and regulates RNA polymerase II elongation. Does not bind other histone H3 subtypes (H3.1 or H3.2). Colocalizes with highly expressed genes and functions as a transcription corepressor by modulating RNA polymerase II at the elongation stage. Binds non-specifically to dsDNA. Acts as a tumor-suppressor by repressing a transcriptional program essential for tumor cell growth. The chain is Zinc finger MYND domain-containing protein 11 (Zmynd11) from Mus musculus (Mouse).